A 107-amino-acid polypeptide reads, in one-letter code: CLAVATA3/ESR (CLE)-related protein 13 (107 aa).

The signal sequence occupies residues 1–25; that stretch reads MATTRVSHVLGFLLWISLLIFVSIG. Asn29 carries N-linked (GlcNAc...) asparagine glycosylation. The tract at residues 79-107 is disordered; that stretch reads ALPAGGSEIDPRYGVEKRLVPSGPNPLHH. Basic and acidic residues predominate over residues 87-97; that stretch reads IDPRYGVEKRL. A hydroxyproline mark is found at Pro99 and Pro102. The O-linked (Ara...) hydroxyproline glycan is linked to Pro102.

Belongs to the CLV3/ESR signal peptide family. In terms of processing, the O-glycosylation (arabinosylation) of the hydroxyproline Pro-102 enhances binding affinity of the CLE13p peptide for its receptor. Mostly expressed in seedlings, roots, flowers, stems and apex, and, to a lower extent, in leaves and siliques.

It localises to the secreted. Its subcellular location is the extracellular space. Its function is as follows. Extracellular signal peptide that regulates cell fate. Represses root apical meristem maintenance. Regulates the transition of protophloem cells from proliferation to differentiation, thus impinging on postembryonic growth capacity of the root meristem; this signaling pathway requires CRN and CLV2. In Arabidopsis thaliana (Mouse-ear cress), this protein is CLAVATA3/ESR (CLE)-related protein 13.